Consider the following 256-residue polypeptide: Pimeloyl-[acyl-carrier protein] methyl ester esterase (256 aa).

One can recognise an AB hydrolase-1 domain in the interval 15-242; the sequence is HLVLLHGWGL…AAHAPFISHP (228 aa). Substrate is bound by residues Trp-22, 82–83, and 143–147; these read SL and FLALQ. The Nucleophile role is filled by Ser-82. Active-site residues include Asp-207 and His-235. Residue His-235 participates in substrate binding.

Belongs to the AB hydrolase superfamily. Carboxylesterase BioH family. Monomer.

Its subcellular location is the cytoplasm. It carries out the reaction 6-carboxyhexanoyl-[ACP] methyl ester + H2O = 6-carboxyhexanoyl-[ACP] + methanol + H(+). It functions in the pathway cofactor biosynthesis; biotin biosynthesis. Functionally, the physiological role of BioH is to remove the methyl group introduced by BioC when the pimeloyl moiety is complete. It allows to synthesize pimeloyl-ACP via the fatty acid synthetic pathway through the hydrolysis of the ester bonds of pimeloyl-ACP esters. This is Pimeloyl-[acyl-carrier protein] methyl ester esterase from Salmonella choleraesuis (strain SC-B67).